Here is a 198-residue protein sequence, read N- to C-terminus: dTTP/UTP pyrophosphatase (198 aa).

Aspartate 69 acts as the Proton acceptor in catalysis.

It belongs to the Maf family. YhdE subfamily. A divalent metal cation serves as cofactor.

It is found in the cytoplasm. The enzyme catalyses dTTP + H2O = dTMP + diphosphate + H(+). The catalysed reaction is UTP + H2O = UMP + diphosphate + H(+). Its function is as follows. Nucleoside triphosphate pyrophosphatase that hydrolyzes dTTP and UTP. May have a dual role in cell division arrest and in preventing the incorporation of modified nucleotides into cellular nucleic acids. This Idiomarina loihiensis (strain ATCC BAA-735 / DSM 15497 / L2-TR) protein is dTTP/UTP pyrophosphatase.